We begin with the raw amino-acid sequence, 442 residues long: Chromosomal replication initiator protein DnaA (442 aa).

The interval 1 to 75 (MDAWPRCLER…GNGEVALAVG (75 aa)) is domain I, interacts with DnaA modulators. The segment at 75–104 (GSRPRAPEPLPAPQAVASAPAAAPIVPFAG) is domain II. The tract at residues 105 to 322 (NLDSHYTFAN…GALNTLVARA (218 aa)) is domain III, AAA+ region. Residues Gly-150, Gly-152, Lys-153, and Thr-154 each contribute to the ATP site. Positions 323 to 442 (NFTGRSITVE…WEKLIRKLSE (120 aa)) are domain IV, binds dsDNA.

The protein belongs to the DnaA family. In terms of assembly, oligomerizes as a right-handed, spiral filament on DNA at oriC.

The protein resides in the cytoplasm. Functionally, plays an essential role in the initiation and regulation of chromosomal replication. ATP-DnaA binds to the origin of replication (oriC) to initiate formation of the DNA replication initiation complex once per cell cycle. Binds the DnaA box (a 9 base pair repeat at the origin) and separates the double-stranded (ds)DNA. Forms a right-handed helical filament on oriC DNA; dsDNA binds to the exterior of the filament while single-stranded (ss)DNA is stabiized in the filament's interior. The ATP-DnaA-oriC complex binds and stabilizes one strand of the AT-rich DNA unwinding element (DUE), permitting loading of DNA polymerase. After initiation quickly degrades to an ADP-DnaA complex that is not apt for DNA replication. Binds acidic phospholipids. This chain is Chromosomal replication initiator protein DnaA, found in Xanthomonas campestris pv. campestris (strain B100).